Here is a 760-residue protein sequence, read N- to C-terminus: Xaa-Pro dipeptidyl-peptidase (760 aa).

Residues S349, D469, and H499 each act as charge relay system in the active site.

The protein belongs to the peptidase S15 family. As to quaternary structure, homodimer.

The protein localises to the cytoplasm. It catalyses the reaction Hydrolyzes Xaa-Pro-|- bonds to release unblocked, N-terminal dipeptides from substrates including Ala-Pro-|-p-nitroanilide and (sequentially) Tyr-Pro-|-Phe-Pro-|-Gly-Pro-|-Ile.. Functionally, removes N-terminal dipeptides sequentially from polypeptides having unsubstituted N-termini provided that the penultimate residue is proline. The chain is Xaa-Pro dipeptidyl-peptidase from Streptococcus pyogenes serotype M49 (strain NZ131).